The sequence spans 60 residues: UPF0337 protein SAV1625 (60 aa).

The tract at residues 18–41 (VGNVTDNKELEKEGQQDKATGKAK) is disordered. Basic and acidic residues predominate over residues 23 to 41 (DNKELEKEGQQDKATGKAK).

It belongs to the UPF0337 (CsbD) family.

The chain is UPF0337 protein SAV1625 from Staphylococcus aureus (strain Mu50 / ATCC 700699).